The chain runs to 650 residues: Protein kinase domain-containing protein ppk38 (650 aa).

Positions 33-315 (VTVKRYLAEG…MRNVPIHIYD (283 aa)) constitute a Protein kinase domain. Disordered regions lie at residues 344-442 (IHQS…PTTP), 517-571 (KVAA…PTNM), and 591-616 (RRVSKPEKEHTNPNAEQGDVIPEKPM). Composition is skewed to polar residues over residues 369–415 (NVNS…NFRV) and 533–554 (SVENPQNNISAPTPSSLQSSNA).

The chain is Protein kinase domain-containing protein ppk38 (ppk38) from Schizosaccharomyces pombe (strain 972 / ATCC 24843) (Fission yeast).